Reading from the N-terminus, the 349-residue chain is Anthranilate phosphoribosyltransferase (349 aa).

Residues Gly-82, 85–86, 92–95, 110–118, and Ser-122 each bind 5-phospho-alpha-D-ribose 1-diphosphate; these read GD, NVST, and KHGNRAVSG. Gly-82 provides a ligand contact to anthranilate. Ser-94 lines the Mg(2+) pocket. Residue Asn-113 coordinates anthranilate. Arg-168 provides a ligand contact to anthranilate. The Mg(2+) site is built by Asp-227 and Glu-228.

This sequence belongs to the anthranilate phosphoribosyltransferase family. In terms of assembly, homodimer. Mg(2+) is required as a cofactor.

The catalysed reaction is N-(5-phospho-beta-D-ribosyl)anthranilate + diphosphate = 5-phospho-alpha-D-ribose 1-diphosphate + anthranilate. Its pathway is amino-acid biosynthesis; L-tryptophan biosynthesis; L-tryptophan from chorismate: step 2/5. In terms of biological role, catalyzes the transfer of the phosphoribosyl group of 5-phosphorylribose-1-pyrophosphate (PRPP) to anthranilate to yield N-(5'-phosphoribosyl)-anthranilate (PRA). This Pseudomonas fluorescens (strain ATCC BAA-477 / NRRL B-23932 / Pf-5) protein is Anthranilate phosphoribosyltransferase.